A 404-amino-acid polypeptide reads, in one-letter code: Translation initiation factor eIF2B subunit gamma (404 aa).

This sequence belongs to the eIF-2B gamma/epsilon subunits family. In terms of assembly, component of the translation initiation factor 2B (eIF2B) complex which is a heterodecamer of two sets of five different subunits: alpha, beta, gamma, delta and epsilon. Subunits alpha, beta and delta comprise a regulatory subcomplex and subunits epsilon and gamma comprise a catalytic subcomplex. Within the complex, the hexameric regulatory complex resides at the center, with the two heterodimeric catalytic subcomplexes bound on opposite sides.

Its subcellular location is the cytoplasm. The protein resides in the cytosol. Its function is as follows. Acts as a component of the translation initiation factor 2B (eIF2B) complex, which catalyzes the exchange of GDP for GTP on the eukaryotic initiation factor 2 (eIF2) complex gamma subunit. Its guanine nucleotide exchange factor activity is repressed when bound to eIF2 complex phosphorylated on the alpha subunit, thereby limiting the amount of methionyl-initiator methionine tRNA available to the ribosome and consequently global translation is repressed. The chain is Translation initiation factor eIF2B subunit gamma from Caenorhabditis elegans.